Consider the following 354-residue polypeptide: Fe(3+) ions import ATP-binding protein FbpC (354 aa).

One can recognise an ABC transporter domain in the interval 4–236 (LELHAVHKSF…PRDAQTALFL (233 aa)). 36–43 (GPSGSGKT) contributes to the ATP binding site.

Belongs to the ABC transporter superfamily. Fe(3+) ion importer (TC 3.A.1.10) family. As to quaternary structure, the complex is composed of two ATP-binding proteins (FbpC), two transmembrane proteins (FbpB) and a solute-binding protein (FbpA).

It localises to the cell inner membrane. The catalysed reaction is Fe(3+)(out) + ATP + H2O = Fe(3+)(in) + ADP + phosphate + H(+). Functionally, part of the ABC transporter complex FbpABC involved in Fe(3+) ions import. Responsible for energy coupling to the transport system. This Pseudomonas fluorescens (strain ATCC BAA-477 / NRRL B-23932 / Pf-5) protein is Fe(3+) ions import ATP-binding protein FbpC.